Here is a 754-residue protein sequence, read N- to C-terminus: 5-methyltetrahydropteroyltriglutamate--homocysteine methyltransferase (754 aa).

5-methyltetrahydropteroyltri-L-glutamate contacts are provided by residues 15–18 (RELK) and lysine 114. L-homocysteine is bound by residues 430–432 (IGS) and glutamate 483. Residues 430-432 (IGS) and glutamate 483 contribute to the L-methionine site. Residues 514 to 515 (RC) and tryptophan 560 contribute to the 5-methyltetrahydropteroyltri-L-glutamate site. Aspartate 598 is a binding site for L-homocysteine. Aspartate 598 contributes to the L-methionine binding site. Glutamate 604 serves as a coordination point for 5-methyltetrahydropteroyltri-L-glutamate. The Zn(2+) site is built by histidine 641, cysteine 643, and glutamate 665. Residue histidine 694 is the Proton donor of the active site. A Zn(2+)-binding site is contributed by cysteine 726.

Belongs to the vitamin-B12 independent methionine synthase family. Zn(2+) is required as a cofactor.

It catalyses the reaction 5-methyltetrahydropteroyltri-L-glutamate + L-homocysteine = tetrahydropteroyltri-L-glutamate + L-methionine. The protein operates within amino-acid biosynthesis; L-methionine biosynthesis via de novo pathway; L-methionine from L-homocysteine (MetE route): step 1/1. Catalyzes the transfer of a methyl group from 5-methyltetrahydrofolate to homocysteine resulting in methionine formation. The polypeptide is 5-methyltetrahydropteroyltriglutamate--homocysteine methyltransferase (Campylobacter jejuni subsp. jejuni serotype O:2 (strain ATCC 700819 / NCTC 11168)).